The primary structure comprises 579 residues: Alpha-glucosidase (579 aa).

Asp-212 functions as the Nucleophile in the catalytic mechanism. Glu-269 serves as the catalytic Proton donor.

This sequence belongs to the glycosyl hydrolase 13 family.

The enzyme catalyses Hydrolysis of terminal, non-reducing (1-&gt;4)-linked alpha-D-glucose residues with release of alpha-D-glucose.. In Schizosaccharomyces pombe (strain 972 / ATCC 24843) (Fission yeast), this protein is Alpha-glucosidase (mal1).